Consider the following 175-residue polypeptide: Transcriptional regulator GadE (175 aa).

Residues 109–174 enclose the HTH luxR-type domain; that stretch reads HKNSQLCFSH…DIVTLGITSY (66 aa). The H-T-H motif DNA-binding region spans 133 to 152; that stretch reads ESNITSTLNISQQTLKIQKF.

In terms of biological role, regulates the expression of several genes involved in acid resistance. Required for the expression of gadA and gadBC, among others, regardless of media or growth conditions. Binds directly to the 20 bp GAD box found in the control regions of both loci. Could be involved in the regulation of the genes coding for the type III secretion system in enterohaemorragic strains. The chain is Transcriptional regulator GadE (gadE) from Escherichia coli O157:H7.